The sequence spans 554 residues: Valerianol synthase TPS1G (554 aa).

Residues Asp307 and Asp311 each coordinate Mg(2+). Positions 326 to 330 (VQRWD) match the DDXXD motif motif. Mg(2+) is bound by residues Asp452, Ser456, and Glu460.

The protein belongs to the terpene synthase family. It depends on Mg(2+) as a cofactor.

The enzyme catalyses (2E,6E)-farnesyl diphosphate + H2O = valerianol + diphosphate. Its pathway is secondary metabolite biosynthesis; terpenoid biosynthesis. Its function is as follows. Terpene synthase that catalyzes the biosynthesis of the terpene valerianol, which is a volatile compound of floral scent. The protein is Valerianol synthase TPS1G of Camellia hiemalis (Camellia).